A 110-amino-acid chain; its full sequence is Iron-sulfur cluster assembly protein CyaY (110 aa).

Belongs to the frataxin family.

In terms of biological role, involved in iron-sulfur (Fe-S) cluster assembly. May act as a regulator of Fe-S biogenesis. The sequence is that of Iron-sulfur cluster assembly protein CyaY from Ectopseudomonas mendocina (strain ymp) (Pseudomonas mendocina).